A 335-amino-acid polypeptide reads, in one-letter code: Ribosomal RNA large subunit methyltransferase F (335 aa).

It belongs to the methyltransferase superfamily. METTL16/RlmF family.

It localises to the cytoplasm. It carries out the reaction adenosine(1618) in 23S rRNA + S-adenosyl-L-methionine = N(6)-methyladenosine(1618) in 23S rRNA + S-adenosyl-L-homocysteine + H(+). Specifically methylates the adenine in position 1618 of 23S rRNA. The chain is Ribosomal RNA large subunit methyltransferase F from Yersinia enterocolitica serotype O:8 / biotype 1B (strain NCTC 13174 / 8081).